Consider the following 307-residue polypeptide: Fructokinase (307 aa).

It belongs to the carbohydrate kinase PfkB family.

The catalysed reaction is D-fructose + ATP = D-fructose 6-phosphate + ADP + H(+). This Vibrio alginolyticus protein is Fructokinase (scrK).